Here is a 181-residue protein sequence, read N- to C-terminus: Thioredoxin-like protein CITRX2, chloroplastic (181 aa).

The transit peptide at 1–70 (MQAATLSFQP…PDVATGKYVR (70 aa)) directs the protein to the chloroplast. Residues 72 to 181 (DYLVKKVSAK…MMRDIINNDL (110 aa)) form the Thioredoxin domain. Active-site nucleophile residues include cysteine 104 and cysteine 107. Cysteine 104 and cysteine 107 are oxidised to a cystine.

Belongs to the thioredoxin family. Plant CITRX-type subfamily.

It localises to the plastid. Its subcellular location is the chloroplast. Its function is as follows. Probable thiol-disulfide oxidoreductase that may play a role in proper chloroplast development. This chain is Thioredoxin-like protein CITRX2, chloroplastic, found in Nicotiana benthamiana.